A 103-amino-acid polypeptide reads, in one-letter code: Hexon-interlacing protein (103 aa).

Positions 25 to 45 (RQNVTGSDLGGKPVPSDVLES) are disordered. A coiled-coil region spans residues 72-99 (LDDLKTQVAAMQNSVTAIQEELKDLKQR).

This sequence belongs to the adenoviridae hexon-interlacing protein family. As to quaternary structure, homotrimer. Interacts with hexon protein; this interaction tethers the hexons together. Self-interacts with adjacent proteins. Interacts with kinesin light chain KLC1; this interaction leads to capsid disruption at the nuclear pore complex during virus entry into host cell.

It is found in the virion. Its subcellular location is the host nucleus. Structural component of the virion that acts as a cement protein on the capsid exterior and forms triskelion structures consisting of three molecules that stabilize three hexon trimers at the center of each icosahedral facet and fixes the peripentonal hexons. Dispensable for assembly. During virus entry, recruits the anterograde motor kinesin-1 to the capsid docked at the nuclear pore complex thereby subjecting the docked capsid to a pulling force. The resulting tension leads to capsid disruption, dispersion of capsid fragments toward cell periphery and eventually viral DNA entry into the host nucleus. This Canine adenovirus serotype 1 (strain CLL) (CAdV-1) protein is Hexon-interlacing protein.